The primary structure comprises 219 residues: UPF0502 protein Gura_0277 (219 aa).

Belongs to the UPF0502 family.

This chain is UPF0502 protein Gura_0277, found in Geotalea uraniireducens (strain Rf4) (Geobacter uraniireducens).